The sequence spans 672 residues: tRNA 5-methylaminomethyl-2-thiouridine biosynthesis bifunctional protein MnmC (672 aa).

A tRNA (mnm(5)s(2)U34)-methyltransferase region spans residues Met1–Glu243. Positions Ile269–Leu672 are FAD-dependent cmnm(5)s(2)U34 oxidoreductase.

In the N-terminal section; belongs to the methyltransferase superfamily. tRNA (mnm(5)s(2)U34)-methyltransferase family. This sequence in the C-terminal section; belongs to the DAO family. The cofactor is FAD.

It localises to the cytoplasm. The enzyme catalyses 5-aminomethyl-2-thiouridine(34) in tRNA + S-adenosyl-L-methionine = 5-methylaminomethyl-2-thiouridine(34) in tRNA + S-adenosyl-L-homocysteine + H(+). Catalyzes the last two steps in the biosynthesis of 5-methylaminomethyl-2-thiouridine (mnm(5)s(2)U) at the wobble position (U34) in tRNA. Catalyzes the FAD-dependent demodification of cmnm(5)s(2)U34 to nm(5)s(2)U34, followed by the transfer of a methyl group from S-adenosyl-L-methionine to nm(5)s(2)U34, to form mnm(5)s(2)U34. The chain is tRNA 5-methylaminomethyl-2-thiouridine biosynthesis bifunctional protein MnmC from Vibrio campbellii (strain ATCC BAA-1116).